The following is a 521-amino-acid chain: Solute carrier family 35 member F4 (521 aa).

10 consecutive transmembrane segments (helical) span residues 160–180 (MVLK…SWVG), 192–212 (FYCP…FFPV), 248–266 (FLKR…NYLY), 277–297 (DVSA…WIVL), 301–321 (FMGV…MMAY), 330–350 (IIGV…KVLF), 365–385 (FVST…VILY), 395–417 (FAAL…NILV), 419–441 (VGVV…PGNA), and 450–470 (VIFN…FLLM). An EamA domain is found at 261 to 321 (LTNYLYLLAL…AITGIVMMAY (61 aa)).

This sequence belongs to the SLC35F solute transporter family.

It is found in the membrane. Its function is as follows. Putative solute transporter. This Homo sapiens (Human) protein is Solute carrier family 35 member F4 (SLC35F4).